The sequence spans 358 residues: 3-O-methylredipecamine 2-O-methyltransferase IpeOMT3 (358 aa).

The S-adenosyl-L-methionine site is built by Gly-193, Asp-216, Asp-236, Met-237, and Lys-250. His-254 (proton acceptor) is an active-site residue.

Belongs to the class I-like SAM-binding methyltransferase superfamily. Cation-independent O-methyltransferase family. In terms of tissue distribution, expressed in roots.

The protein localises to the cytoplasm. It is found in the cytosol. The enzyme catalyses (S)-reticuline + S-adenosyl-L-methionine = (S)-laudanine + S-adenosyl-L-homocysteine + H(+). The protein operates within alkaloid biosynthesis. Functionally, O-methyltransferase involved in the biosynthesis of ipecac and benzylisoquinoline monoterpenoid-isoquinoline alkaloids natural products, starting by the condensation of dopamine and secologanin, and including emetine and cephaeline, drugs used both as anti-protozoal (e.g. treatment of ameobiasis) and as emetic agents. Catalyzes 2-O-methylation of 3-O-methylredipecamine and, with less efficiency, the 7-O-methylation of (S)-coclaurine, (R,S)-N-methylcoclaurine, (R,S)-4'-O-methylcoclaurine, (R,S)-6-O-methyllaudanosoline, nororientaline, (S)-norreticuline and (S)-reticuline. In Carapichea ipecacuanha (Ipecac), this protein is 3-O-methylredipecamine 2-O-methyltransferase IpeOMT3.